Here is a 398-residue protein sequence, read N- to C-terminus: Stearoyl-[acyl-carrier-protein] 9-desaturase, chloroplastic (398 aa).

A chloroplast-targeting transit peptide spans 1–34 (MALKLHHTAFNPSMAVTSSGLPRSYHLRSHRVFM). The segment at 46 to 66 (IPNAKKPHMPPREAHVQKTHS) is disordered. Residues Glu140, Glu178, His181, Glu231, Glu264, and His267 each contribute to the Fe cation site.

It belongs to the fatty acid desaturase type 2 family. Homodimer. Fe(2+) is required as a cofactor.

The protein resides in the plastid. It localises to the chloroplast. It carries out the reaction octadecanoyl-[ACP] + 2 reduced [2Fe-2S]-[ferredoxin] + O2 + 2 H(+) = (9Z)-octadecenoyl-[ACP] + 2 oxidized [2Fe-2S]-[ferredoxin] + 2 H2O. It functions in the pathway lipid metabolism; fatty acid metabolism. Its function is as follows. Converts stearoyl-ACP to oleoyl-ACP by introduction of a cis double bond between carbons 9 and 10 of the acyl chain. This is Stearoyl-[acyl-carrier-protein] 9-desaturase, chloroplastic from Simmondsia chinensis (Jojoba).